The following is a 407-amino-acid chain: Peptidase T (407 aa).

His82 serves as a coordination point for Zn(2+). Asp84 is a catalytic residue. Residue Asp143 coordinates Zn(2+). The Proton acceptor role is filled by Glu177. Glu178, Asp200, and His382 together coordinate Zn(2+).

It belongs to the peptidase M20B family. Zn(2+) serves as cofactor.

The protein localises to the cytoplasm. The enzyme catalyses Release of the N-terminal residue from a tripeptide.. In terms of biological role, cleaves the N-terminal amino acid of tripeptides. The protein is Peptidase T of Streptococcus uberis (strain ATCC BAA-854 / 0140J).